The primary structure comprises 247 residues: 5-oxoprolinase subunit A (247 aa).

It belongs to the LamB/PxpA family. Forms a complex composed of PxpA, PxpB and PxpC.

The enzyme catalyses 5-oxo-L-proline + ATP + 2 H2O = L-glutamate + ADP + phosphate + H(+). Functionally, catalyzes the cleavage of 5-oxoproline to form L-glutamate coupled to the hydrolysis of ATP to ADP and inorganic phosphate. This chain is 5-oxoprolinase subunit A, found in Histophilus somni (strain 129Pt) (Haemophilus somnus).